We begin with the raw amino-acid sequence, 343 residues long: MQLQEIAQKLGCPYEGDPTLEIHGVASLAEARPGELSFLSEARYLPLLEQTQASAVIVEESLVLPRPIACLRGKDPRLLFAQAIELFYQPYRLPVGIHPTAVIDPSVELGEGVAIGPHVVVMEGVKIGDYTQIHPNVTIYPHVRVGSRCQLFANCVIHERTEIGDDCLIHSGAVIGDDGFGHIPLPDGSWRRMLQAGRVVLEDGVEVGSNTTIDRAAVGETRIGRGTKIDNLVQIGHGVKTGSHCLIVAQVGIAGSTQLGHHVILAGQCGLAGHLHIGDGVRVAAQTGVTSDVPAGQTVAGYPHQPIAEWRRSMAVQRHLPELQRALRKLEARVAKLEQNGGR.

The Proton acceptor role is filled by H237.

It belongs to the transferase hexapeptide repeat family. LpxD subfamily. In terms of assembly, homotrimer.

It catalyses the reaction a UDP-3-O-[(3R)-3-hydroxyacyl]-alpha-D-glucosamine + a (3R)-hydroxyacyl-[ACP] = a UDP-2-N,3-O-bis[(3R)-3-hydroxyacyl]-alpha-D-glucosamine + holo-[ACP] + H(+). Its pathway is bacterial outer membrane biogenesis; LPS lipid A biosynthesis. In terms of biological role, catalyzes the N-acylation of UDP-3-O-acylglucosamine using 3-hydroxyacyl-ACP as the acyl donor. Is involved in the biosynthesis of lipid A, a phosphorylated glycolipid that anchors the lipopolysaccharide to the outer membrane of the cell. The sequence is that of UDP-3-O-acylglucosamine N-acyltransferase from Synechococcus sp. (strain JA-3-3Ab) (Cyanobacteria bacterium Yellowstone A-Prime).